An 823-amino-acid polypeptide reads, in one-letter code: MEKICVAVRVRPPAPENGASLWKVEDNRISLHKSLDTPITTASHAFDHVFDESSTNASVYELLTKDIIHAAVEGFNGTAFAYGQTSSGKTFTMTGSETDPGIIRRSVRDVFERIHMISDREFLIRVSYMEIYNEEINDLLAVENQRLQIHEHLERGVFVAGLKEEIVSDAEQILKLIDSGEVNRHFGETNMNVHSSRSHTIFRMVIESRGKDNSSSDAIRVSVLNLVDLAGSERIAKTGAGGVRLQEGKYINKSLMILGNVINKLSDSTKLRAHIPYRDSKLTRILQPALGGNAKTCIICTIAPEEHHIEESKGTLQFASRAKRITNCAQVNEILTDAALLKRQKLEIEELRMKLQGSHAEVLEQEILNLSNQMLKYELECERLKTQLEEEKRKQKEQENCIKEQQMKIENLNNFVTNSDFKRNQSEDFIISRKTPDGLCNVNDTSDVPGTPCFKSASRSFVVARSNNYSGLSDFSPMVHSLGDVADEDTWMKLNKGFVADLDQIQFTPAVKCQPTPLSIATTECPRENHSEVEDLKSRIQLLTNENDSLQVKFNEQVLLSNNLMQEMSELKQETLTVKEIPNRLSESVANCKDVYKDVIVTMKSLITDKESPTANLLLGTTEITTSLLATLETQFSMIMDGQKTGSSIDHPLSDHWETLRVNLKNTTTLLLSDAQAKDEFLNSHNKGQETAALEEKKLKSELIIIKERYNELEKELCLDKQLLEASRESHEKLIKEVQFLKEERDSLDRKISQSTQRLRVIASDKENALKDLNVEVKRRKDMEEEIKHISIAFATRHKSFVSFHSEIKSKMQKLTTQNSKAP.

The 323-residue stretch at 3–325 (KICVAVRVRP…LQFASRAKRI (323 aa)) folds into the Kinesin motor domain. 83 to 90 (GQTSSGKT) is a binding site for ATP. Coiled-coil stretches lie at residues 341–414 (LKRQ…NLNN), 527–557 (RENH…FNEQ), and 696–786 (EKKL…MEEE).

It belongs to the TRAFAC class myosin-kinesin ATPase superfamily. Kinesin family. KIN-7 subfamily.

The protein is Kinesin-like protein KIN-7N of Arabidopsis thaliana (Mouse-ear cress).